The chain runs to 868 residues: Alanine--tRNA ligase (868 aa).

Residues histidine 555, histidine 559, cysteine 657, and histidine 661 each contribute to the Zn(2+) site. The interval 828–847 (SQVGGKGGGRPDMAQAGGSE) is disordered.

Belongs to the class-II aminoacyl-tRNA synthetase family. Zn(2+) serves as cofactor.

The protein localises to the cytoplasm. It catalyses the reaction tRNA(Ala) + L-alanine + ATP = L-alanyl-tRNA(Ala) + AMP + diphosphate. Functionally, catalyzes the attachment of alanine to tRNA(Ala) in a two-step reaction: alanine is first activated by ATP to form Ala-AMP and then transferred to the acceptor end of tRNA(Ala). Also edits incorrectly charged Ser-tRNA(Ala) and Gly-tRNA(Ala) via its editing domain. The sequence is that of Alanine--tRNA ligase from Pseudoalteromonas translucida (strain TAC 125).